The primary structure comprises 531 residues: UDP-glucuronosyltransferase 1A6 (531 aa).

The N-terminal stretch at 1–26 is a signal peptide; it reads MACLLPAAQTLPAGFLFLVLWASVLG. N-linked (GlcNAc...) asparagine glycosylation is found at N293 and N431. A helical membrane pass occupies residues 489 to 505; it reads VIGFLLAIVLTVVFIVF.

It belongs to the UDP-glycosyltransferase family. In terms of tissue distribution, expressed in liver, kidney and at very low levels in colon.

It localises to the microsome. The protein resides in the endoplasmic reticulum membrane. It carries out the reaction glucuronate acceptor + UDP-alpha-D-glucuronate = acceptor beta-D-glucuronoside + UDP + H(+). The catalysed reaction is (5Z,8Z,11Z,14Z)-eicosatetraenoate + UDP-alpha-D-glucuronate = O-[(5Z),(8Z),(11Z),(14Z)-eicosatetraenoyl]-beta-D-glucuronate + UDP. The enzyme catalyses 15-hydroxy-(5Z,8Z,11Z,13E)-eicosatetraenoate + UDP-alpha-D-glucuronate = 15-O-(beta-D-glucuronosyl)-(5Z,8Z,11Z,14Z)-eicosatetraenoate + UDP + H(+). It catalyses the reaction (E)-ferulate + UDP-alpha-D-glucuronate = (E)-4-O-(beta-D-glucuronosyl)-ferulate + UDP + H(+). It carries out the reaction (E)-ferulate + UDP-alpha-D-glucuronate = (E)-ferulic acid beta-D-glucuronate ester + UDP. UDP-glucuronosyltransferase (UGT) that catalyzes phase II biotransformation reactions in which lipophilic substrates are conjugated with glucuronic acid to facilitate their inactivation and excretion from the body. Essential for the elimination and detoxification of drugs, xenobiotics and endogenous compounds. Involved in the glucuronidation of arachidonic acid (AA) and AA-derived eicosanoids including 15-HETE and 20-HETE. Conjugates small planar phenolic molecules such as 4-nitrophenol, 1-naphthol, and 4-methylumbelliferone. The bulky phenol 4-hydroxybiphenyl, androgens and estrogens are not substrates. 2-hydroxybiphenyl is an excellent substrate. Involved in the glucuronidation of the phytochemical ferulic acid at the phenolic or the carboxylic acid group. The protein is UDP-glucuronosyltransferase 1A6 of Mus musculus (Mouse).